The primary structure comprises 311 residues: MSSIRRRHAAASLDTPAVGGRHELGQNFLVDRGVCTRIAEVVSSTTAHPVLELGAGDGAITRALVAANLPVTALELDPRRVRRLQRTFADGVTVVHGDMLRYDFGPYPHHVVSTVPFSITTPLLRRLIGQRFWHTAVLLVQWEVARKRAGVGGTTMLTAASWPWYEFTLVERVPKTSFDPVPSVDGGILVIERRSAPLLDDRCVGDYQNLVREVYTGPGRGLAAILRTRLPGREVDAWLRRERVDPAALPRDLKAGHWASLYRLYREVGTRPAPAGRSVRARPGSVGPDRSLPPRGLRSGPPRARRRGGGA.

Residues N27, L29, G54, E75, and D98 each coordinate S-adenosyl-L-methionine. The interval 272–311 (PAPAGRSVRARPGSVGPDRSLPPRGLRSGPPRARRRGGGA) is disordered. Over residues 293–302 (PPRGLRSGPP) the composition is skewed to low complexity.

Belongs to the class I-like SAM-binding methyltransferase superfamily. rRNA adenine N(6)-methyltransferase family.

Its function is as follows. Confers resistance to macrolide, lincosamide and streptogramin B antibiotics. This chain is Mycinamicin-resistance protein MyrB (myrB), found in Micromonospora griseorubida.